A 100-amino-acid chain; its full sequence is MELTPREKDKLMLFTAGLVAERRLNRGLKLNYPEAVALISCAIMEGARDGRTVADLMNYGRTVLTADQVMEGVPEMVHNVQVECTFPDGTKLVSIHEPIV.

This sequence belongs to the urease gamma subunit family. As to quaternary structure, heterotrimer of UreA (gamma), UreB (beta) and UreC (alpha) subunits. Three heterotrimers associate to form the active enzyme.

It is found in the cytoplasm. It catalyses the reaction urea + 2 H2O + H(+) = hydrogencarbonate + 2 NH4(+). The protein operates within nitrogen metabolism; urea degradation; CO(2) and NH(3) from urea (urease route): step 1/1. The polypeptide is Urease subunit gamma (Shewanella halifaxensis (strain HAW-EB4)).